A 499-amino-acid chain; its full sequence is Glutamyl-tRNA(Gln) amidotransferase subunit B, chloroplastic/mitochondrial (499 aa).

This sequence belongs to the GatB/GatE family. GatB subfamily. Subunit of the heterotrimeric GatCAB amidotransferase (AdT) complex, composed of A, B and C subunits.

The protein localises to the mitochondrion. The protein resides in the plastid. Its subcellular location is the chloroplast. The catalysed reaction is L-glutamyl-tRNA(Gln) + L-glutamine + ATP + H2O = L-glutaminyl-tRNA(Gln) + L-glutamate + ADP + phosphate + H(+). Functionally, allows the formation of correctly charged Gln-tRNA(Gln) through the transamidation of misacylated Glu-tRNA(Gln) in chloroplasts and mitochondria. The reaction takes place in the presence of glutamine and ATP through an activated gamma-phospho-Glu-tRNA(Gln). This Ostreococcus lucimarinus (strain CCE9901) protein is Glutamyl-tRNA(Gln) amidotransferase subunit B, chloroplastic/mitochondrial.